The chain runs to 609 residues: DNA polymerase alpha subunit B (609 aa).

Ser155 carries the phosphoserine modification. Thr164 carries the phosphothreonine modification. Residues Ser166 and Ser168 each carry the phosphoserine modification.

This sequence belongs to the DNA polymerase alpha subunit B family. Component of the alpha DNA polymerase complex (also known as the alpha DNA polymerase-primase complex) consisting of four subunits: the catalytic subunit PolA1, the regulatory subunit PolA2, and the primase complex subunits Prim1 and Prim2 respectively. PolA1 associates with the DNA primase complex before association with PolA2. Phosphorylated in embryos until cycle 13. Expressed in embryos (at protein level).

The protein resides in the nucleus. Functionally, accessory subunit of the DNA polymerase alpha complex (also known as the alpha DNA polymerase-primase complex) which plays an essential role in the initiation of DNA synthesis. During the S phase of the cell cycle, the DNA polymerase alpha complex (composed of a catalytic subunit PolA1, an accessory subunit PolA2 and two primase subunits, the catalytic subunit Prim1 and the regulatory subunit Prim2) is recruited to DNA at the replicative forks. The primase subunit of the polymerase alpha complex initiates DNA synthesis by oligomerising short RNA primers on both leading and lagging strands. These primers are initially extended by the polymerase alpha catalytic subunit and subsequently transferred to polymerase delta and polymerase epsilon for processive synthesis on the lagging and leading strand, respectively. The polypeptide is DNA polymerase alpha subunit B (Drosophila melanogaster (Fruit fly)).